The chain runs to 84 residues: Beta-defensin 119 (84 aa).

An N-terminal signal peptide occupies residues 1–21 (MKLLYLFLAILLAIEEPVISG). 3 cysteine pairs are disulfide-bonded: cysteine 28–cysteine 55, cysteine 35–cysteine 49, and cysteine 39–cysteine 56.

Belongs to the beta-defensin family. In terms of tissue distribution, abundant expression in the male reproductive tract only. Abundant expressed in testis and the caput region of epididymis, but low in the corpus region.

It localises to the secreted. Has antibacterial activity. This Homo sapiens (Human) protein is Beta-defensin 119 (DEFB119).